The primary structure comprises 379 residues: F-box protein At5g18160 (379 aa).

The tract at residues 1 to 26 (MDKQDEKKQGTTKSSSTLTTRCSHGN) is disordered. Residues 11–26 (TTKSSSTLTTRCSHGN) show a composition bias toward polar residues. The region spanning 28–74 (ISQSNSIPLDITIEILSRLPAKSIVRSRSVSKLWSSITTTPEFIKHR) is the F-box domain.

The protein is F-box protein At5g18160 of Arabidopsis thaliana (Mouse-ear cress).